Reading from the N-terminus, the 269-residue chain is MLRSMLTASTTLNQLQQQIDTISSNLSNSNTTGYKAKDTNFSELVRQQFDQVDEKNEEVAKARKTPPGLRLGVGAMMSSRLVSDQGSIQKTDRDLDIAFTSPYQYLQVNVNGNRQYTRDGALYVTPSAANANQLQLVTGNGYPVLDENGNTVNIDSSMKNITINKNGTLTASDGNAVQRFNLGVVQVNNPQELKSEGNNLFSIDNAAAFEELNGANRQNIGMQQGSLEMSNVDISEQMTDLITSQRSYQLNSRTITMGDQMLGLINSVR.

Residues 7 to 65 adopt a coiled-coil conformation; that stretch reads TASTTLNQLQQQIDTISSNLSNSNTTGYKAKDTNFSELVRQQFDQVDEKNEEVAKARKT.

It belongs to the flagella basal body rod proteins family.

In Bacillus subtilis (strain 168), this protein is Flagellar hook-basal body complex protein FlhP (flhP).